Reading from the N-terminus, the 629-residue chain is tRNA uridine 5-carboxymethylaminomethyl modification enzyme MnmG (629 aa).

Residues 13-18 (GGGHAG), valine 125, and serine 180 contribute to the FAD site. Position 273–287 (273–287 (GPRYCPSIEDKIHRF)) interacts with NAD(+). An FAD-binding site is contributed by glutamine 370.

Belongs to the MnmG family. In terms of assembly, homodimer. Heterotetramer of two MnmE and two MnmG subunits. It depends on FAD as a cofactor.

The protein localises to the cytoplasm. NAD-binding protein involved in the addition of a carboxymethylaminomethyl (cmnm) group at the wobble position (U34) of certain tRNAs, forming tRNA-cmnm(5)s(2)U34. The polypeptide is tRNA uridine 5-carboxymethylaminomethyl modification enzyme MnmG (Shewanella oneidensis (strain ATCC 700550 / JCM 31522 / CIP 106686 / LMG 19005 / NCIMB 14063 / MR-1)).